A 943-amino-acid chain; its full sequence is Isoleucine--tRNA ligase (943 aa).

A 'HIGH' region motif is present at residues 58–68 (PYANGKIHIGH). Glutamate 567 contributes to the L-isoleucyl-5'-AMP binding site. A 'KMSKS' region motif is present at residues 608-612 (KMSKS). Residue lysine 611 participates in ATP binding. Zn(2+)-binding residues include cysteine 906, cysteine 909, cysteine 926, and cysteine 929.

The protein belongs to the class-I aminoacyl-tRNA synthetase family. IleS type 1 subfamily. In terms of assembly, monomer. Requires Zn(2+) as cofactor.

The protein localises to the cytoplasm. It carries out the reaction tRNA(Ile) + L-isoleucine + ATP = L-isoleucyl-tRNA(Ile) + AMP + diphosphate. Catalyzes the attachment of isoleucine to tRNA(Ile). As IleRS can inadvertently accommodate and process structurally similar amino acids such as valine, to avoid such errors it has two additional distinct tRNA(Ile)-dependent editing activities. One activity is designated as 'pretransfer' editing and involves the hydrolysis of activated Val-AMP. The other activity is designated 'posttransfer' editing and involves deacylation of mischarged Val-tRNA(Ile). This is Isoleucine--tRNA ligase from Pseudomonas putida (strain ATCC 47054 / DSM 6125 / CFBP 8728 / NCIMB 11950 / KT2440).